Here is a 218-residue protein sequence, read N- to C-terminus: MTLSRVHQQVIAFPAAKTDTMSYLPDPASINNHQIPTSSKVSYLTGKGKSMLRKKKTDSFTNGARDQDKLGPKLTETVKRKLSLGAKILQMGGLEKIYKRLFKVCDQEKLFKAYQCYLSTTAGPIAGLLFISSKKIAFCSERSIKVASPQGVLSRVHYKVSIPLCKINGVNQSQNTKKPSQKYLEIVTIDNFDFWFMGFVSYQKAFNCLEKALNNDEQ.

The 79-residue stretch at 96–174 folds into the GRAM domain; the sequence is KIYKRLFKVC…CKINGVNQSQ (79 aa).

It belongs to the GEM family.

The polypeptide is GEM-like protein 6 (Arabidopsis thaliana (Mouse-ear cress)).